The sequence spans 444 residues: Protein kinase C and casein kinase substrate in neurons protein 1 (444 aa).

2 positions are modified to phosphoserine: Ser-2 and Ser-79. The region spanning 13-283 is the F-BAR domain; it reads EETTDSFWEV…AIRGADAQED (271 aa). Residues 26 to 275 are a coiled coil; that stretch reads KRTVKRIDDG…HVYRELEQAI (250 aa). 2 disordered regions span residues 173 to 194 and 309 to 386; these read REMN…LQDK and LPHT…DDSK. Thr-184 carries the post-translational modification Phosphothreonine. Residues 314-324 show a composition bias toward basic and acidic residues; the sequence is TKKEKQPKKAE. The segment covering 329 to 351 has biased composition (polar residues); the sequence is TNATGAVESTSQAGDRGSVSSYD. A phosphoserine mark is found at Ser-346, Ser-348, Ser-349, Ser-361, and Ser-365. An SH3 domain is found at 385-444; the sequence is SKGVRVRALYDYDGQEQDELSFKAGDELTKLGEEDEQGWCRGRLDSGQLGLYPANYVEAI. Position 394 is a phosphotyrosine (Tyr-394). 2 positions are modified to phosphoserine: Ser-405 and Ser-430.

It belongs to the PACSIN family. Homodimer. May form heterooligomers with other PACSINs. Interacts with both COBL and DBNL. Identified in a complex composed of COBL, PACSIN1 and WASL. Interacts (via SH3 domain) with SYNJ1 and WASL. Interacts (via SH3 domain) with DNM1; the interaction is reduced by DNM1 phosphorylation. Interacts with DNM2 and DNM3. Interacts with MAPT. Interacts with EHD1 and EHD3. Interacts with TRPV4. Phosphorylated by casein kinase 2 (CK2) and protein kinase C (PKC).

Its subcellular location is the cytoplasm. It localises to the cell projection. The protein localises to the synapse. It is found in the synaptosome. The protein resides in the ruffle membrane. Its subcellular location is the membrane. It localises to the cytoplasmic vesicle membrane. The protein localises to the cytosol. It is found in the cell membrane. Functionally, binds to membranes via its F-BAR domain and mediates membrane tubulation. Plays a role in the reorganization of the microtubule cytoskeleton via its interaction with MAPT; this decreases microtubule stability and inhibits MAPT-induced microtubule polymerization. Plays a role in cellular transport processes by recruiting DNM1, DNM2 and DNM3 to membranes. Plays a role in the reorganization of the actin cytoskeleton and in neuron morphogenesis via its interaction with COBL and WASL, and by recruiting COBL to the cell cortex. Plays a role in the regulation of neurite formation, neurite branching and the regulation of neurite length. Required for normal synaptic vesicle endocytosis; this process retrieves previously released neurotransmitters to accommodate multiple cycles of neurotransmission. Required for normal excitatory and inhibitory synaptic transmission. The protein is Protein kinase C and casein kinase substrate in neurons protein 1 (Pacsin1) of Pongo abelii (Sumatran orangutan).